Consider the following 195-residue polypeptide: Nucleoid occlusion factor SlmA (195 aa).

The HTH tetR-type domain occupies 7-67; it reads TNRRAQILQA…GLIEFIEETL (61 aa). A DNA-binding region (H-T-H motif) is located at residues 30–49; that stretch reads TTAKLAEKVGVSEAALYRHF. Residues 109–141 adopt a coiled-coil conformation; it reads DALMGEQDRLRARIAKLFERLETQLKQVLRERK.

This sequence belongs to the nucleoid occlusion factor SlmA family. As to quaternary structure, homodimer. Interacts with FtsZ.

It is found in the cytoplasm. The protein resides in the nucleoid. Functionally, required for nucleoid occlusion (NO) phenomenon, which prevents Z-ring formation and cell division over the nucleoid. Acts as a DNA-associated cell division inhibitor that binds simultaneously chromosomal DNA and FtsZ, and disrupts the assembly of FtsZ polymers. SlmA-DNA-binding sequences (SBS) are dispersed on non-Ter regions of the chromosome, preventing FtsZ polymerization at these regions. This is Nucleoid occlusion factor SlmA from Alteromonas mediterranea (strain DSM 17117 / CIP 110805 / LMG 28347 / Deep ecotype).